A 689-amino-acid polypeptide reads, in one-letter code: PR domain zinc finger protein 8 (689 aa).

An SET domain is found at 16–131; it reads KAVQQCLTDI…KDEELLVWYG (116 aa). S-adenosyl-L-methionine is bound at residue Y130. The C2H2-type 1 zinc finger occupies 155-183; that stretch reads YTCLECSQRFQFEFPYVAHLRFRCPKRLH. Disordered stretches follow at residues 185-333 and 397-506; these read ADIS…VGGR and SLQE…QPAR. Over residues 193–210 the composition is skewed to gly residues; it reads QGGGVGTKDHGGGGGGGK. 2 stretches are compositionally biased toward low complexity: residues 241-258 and 273-286; these read PESSNPSAAAGGSSAKPS and GGSSCSPAQSLSSG. A compositionally biased stretch (gly residues) spans 322–333; the sequence is EGGGGAGLVGGR. Low complexity predominate over residues 423–433; the sequence is STPAAASPVGA. The span at 472 to 491 shows a compositional bias: gly residues; it reads TSGGGGTGAGAAGGAGGGQG. 2 C2H2-type zinc fingers span residues 625–648 and 666–688; these read NWCAKCNASFRMTSDLVYHMRSHH and LKCPICNESFRERHHLSRHMTSH.

This sequence belongs to the class V-like SAM-binding methyltransferase superfamily. Interacts with EPM2A and NHLRC1. This interaction sequesters EPM2A and NHLRC1 to the nucleus. Interacts with BHLHE22. In terms of tissue distribution, expressed in brain, heart, skeletal muscle, testes, prostate.

The protein localises to the nucleus. Its function is as follows. Probable histone methyltransferase, preferentially acting on 'Lys-9' of histone H3. Involved in the control of steroidogenesis through transcriptional repression of steroidogenesis marker genes such as CYP17A1 and LHCGR. Forms with BHLHE22 a transcriptional repressor complex controlling genes involved in neural development and neuronal differentiation. In the retina, it is required for rod bipolar and type 2 OFF-cone bipolar cell survival. This chain is PR domain zinc finger protein 8 (PRDM8), found in Homo sapiens (Human).